The following is a 300-amino-acid chain: NAD kinase (300 aa).

Asp-75 functions as the Proton acceptor in the catalytic mechanism. Residues 75–76 (DG), 149–150 (ND), Arg-177, Asp-179, 190–195 (TAYALS), Ala-214, and Gln-248 each bind NAD(+).

Belongs to the NAD kinase family. A divalent metal cation serves as cofactor.

The protein resides in the cytoplasm. The catalysed reaction is NAD(+) + ATP = ADP + NADP(+) + H(+). In terms of biological role, involved in the regulation of the intracellular balance of NAD and NADP, and is a key enzyme in the biosynthesis of NADP. Catalyzes specifically the phosphorylation on 2'-hydroxyl of the adenosine moiety of NAD to yield NADP. The polypeptide is NAD kinase (Paraburkholderia phytofirmans (strain DSM 17436 / LMG 22146 / PsJN) (Burkholderia phytofirmans)).